The primary structure comprises 146 residues: Large ribosomal subunit protein uL15 (146 aa).

The span at 1 to 10 shows a compositional bias: basic and acidic residues; that stretch reads MTIKLHDLKP. A disordered region spans residues 1–52; sequence MTIKLHDLKPARGSKTPRTRVGRGEGSKGKTAGRGTKGTKARKNVPVTFEGG.

This sequence belongs to the universal ribosomal protein uL15 family. Part of the 50S ribosomal subunit.

Binds to the 23S rRNA. This Mycolicibacterium paratuberculosis (strain ATCC BAA-968 / K-10) (Mycobacterium paratuberculosis) protein is Large ribosomal subunit protein uL15.